Here is a 509-residue protein sequence, read N- to C-terminus: Lysine--tRNA ligase (509 aa).

2 residues coordinate Mg(2+): Glu-418 and Glu-425.

The protein belongs to the class-II aminoacyl-tRNA synthetase family. As to quaternary structure, homodimer. Mg(2+) is required as a cofactor.

The protein localises to the cytoplasm. The enzyme catalyses tRNA(Lys) + L-lysine + ATP = L-lysyl-tRNA(Lys) + AMP + diphosphate. This chain is Lysine--tRNA ligase, found in Acinetobacter baumannii (strain ATCC 17978 / DSM 105126 / CIP 53.77 / LMG 1025 / NCDC KC755 / 5377).